The primary structure comprises 350 residues: sn-1 oleoyl-lipid 12-desaturase (350 aa).

2 helical membrane passes run 41 to 61 (AWTQ…SLAI) and 64 to 84 (WFLL…FFVI). The short motif at 86–90 (HDCGH) is the Histidine box-1 element. Residues 98–118 (WVNDLVGHIFMMPLIYPFHSW) traverse the membrane as a helical segment. The short motif at 122–126 (HNHHH) is the Histidine box-2 element. 2 consecutive transmembrane segments (helical) span residues 196–216 (VAVV…TTGI) and 219–239 (FVKF…TFTI). The Histidine box-3 motif lies at 287–291 (HHLST).

This sequence belongs to the fatty acid desaturase type 2 family. Fe(2+) serves as cofactor.

The protein localises to the membrane. It carries out the reaction a 1-[(9Z)-octadecenoyl]-2-acyl-glycerolipid + 2 reduced [2Fe-2S]-[ferredoxin] + O2 + 2 H(+) = a 1-[(9Z,12Z)-octadecdienoyl]-2-acyl-glycerolipid + 2 oxidized [2Fe-2S]-[ferredoxin] + 2 H2O. The protein operates within lipid metabolism; polyunsaturated fatty acid biosynthesis. Its function is as follows. Desaturase involved in fatty acid biosynthesis. Introduces a double bond at carbon 12 of oleoyl groups (18:1) attached to the sn-1 position of the glycerol moiety of membrane glycerolipids. In Anabaena variabilis, this protein is sn-1 oleoyl-lipid 12-desaturase.